A 270-amino-acid polypeptide reads, in one-letter code: Phosphatidylglycerol--prolipoprotein diacylglyceryl transferase (270 aa).

The next 4 helical transmembrane spans lie at 19–39, 56–76, 92–112, and 116–136; these read FPVY…LWLA, LVLI…VIFE, QGGL…VLFA, and GVSF…GQAI. Arg138 serves as a coordination point for a 1,2-diacyl-sn-glycero-3-phospho-(1'-sn-glycerol). 3 helical membrane passes run 178-198, 206-226, and 236-256; these read HPTF…LLAL, GELF…VEGL, and LRIA…FIIV.

This sequence belongs to the Lgt family.

Its subcellular location is the cell membrane. It catalyses the reaction L-cysteinyl-[prolipoprotein] + a 1,2-diacyl-sn-glycero-3-phospho-(1'-sn-glycerol) = an S-1,2-diacyl-sn-glyceryl-L-cysteinyl-[prolipoprotein] + sn-glycerol 1-phosphate + H(+). It functions in the pathway protein modification; lipoprotein biosynthesis (diacylglyceryl transfer). In terms of biological role, catalyzes the transfer of the diacylglyceryl group from phosphatidylglycerol to the sulfhydryl group of the N-terminal cysteine of a prolipoprotein, the first step in the formation of mature lipoproteins. In Bacillus cereus (strain B4264), this protein is Phosphatidylglycerol--prolipoprotein diacylglyceryl transferase.